The chain runs to 665 residues: DNA mismatch repair protein MutL (665 aa).

Belongs to the DNA mismatch repair MutL/HexB family.

In terms of biological role, this protein is involved in the repair of mismatches in DNA. It is required for dam-dependent methyl-directed DNA mismatch repair. May act as a 'molecular matchmaker', a protein that promotes the formation of a stable complex between two or more DNA-binding proteins in an ATP-dependent manner without itself being part of a final effector complex. The chain is DNA mismatch repair protein MutL from Acidobacterium capsulatum (strain ATCC 51196 / DSM 11244 / BCRC 80197 / JCM 7670 / NBRC 15755 / NCIMB 13165 / 161).